The following is a 469-amino-acid chain: Proline--tRNA ligase (469 aa).

The protein belongs to the class-II aminoacyl-tRNA synthetase family. ProS type 3 subfamily. As to quaternary structure, homodimer.

It is found in the cytoplasm. It carries out the reaction tRNA(Pro) + L-proline + ATP = L-prolyl-tRNA(Pro) + AMP + diphosphate. Functionally, catalyzes the attachment of proline to tRNA(Pro) in a two-step reaction: proline is first activated by ATP to form Pro-AMP and then transferred to the acceptor end of tRNA(Pro). The protein is Proline--tRNA ligase of Methanosphaera stadtmanae (strain ATCC 43021 / DSM 3091 / JCM 11832 / MCB-3).